A 314-amino-acid chain; its full sequence is Methionyl-tRNA formyltransferase (314 aa).

110 to 113 (SLLP) provides a ligand contact to (6S)-5,6,7,8-tetrahydrofolate.

It belongs to the Fmt family.

It catalyses the reaction L-methionyl-tRNA(fMet) + (6R)-10-formyltetrahydrofolate = N-formyl-L-methionyl-tRNA(fMet) + (6S)-5,6,7,8-tetrahydrofolate + H(+). Its function is as follows. Attaches a formyl group to the free amino group of methionyl-tRNA(fMet). The formyl group appears to play a dual role in the initiator identity of N-formylmethionyl-tRNA by promoting its recognition by IF2 and preventing the misappropriation of this tRNA by the elongation apparatus. This chain is Methionyl-tRNA formyltransferase, found in Bacillus cereus (strain ATCC 14579 / DSM 31 / CCUG 7414 / JCM 2152 / NBRC 15305 / NCIMB 9373 / NCTC 2599 / NRRL B-3711).